The primary structure comprises 500 residues: ATP synthase subunit alpha (500 aa).

ATP is bound at residue 169-176 (GDRQTGKT).

The protein belongs to the ATPase alpha/beta chains family. As to quaternary structure, F-type ATPases have 2 components, CF(1) - the catalytic core - and CF(0) - the membrane proton channel. CF(1) has five subunits: alpha(3), beta(3), gamma(1), delta(1), epsilon(1). CF(0) has three main subunits: a(1), b(2) and c(9-12). The alpha and beta chains form an alternating ring which encloses part of the gamma chain. CF(1) is attached to CF(0) by a central stalk formed by the gamma and epsilon chains, while a peripheral stalk is formed by the delta and b chains.

Its subcellular location is the cell membrane. It carries out the reaction ATP + H2O + 4 H(+)(in) = ADP + phosphate + 5 H(+)(out). Produces ATP from ADP in the presence of a proton gradient across the membrane. The alpha chain is a regulatory subunit. The polypeptide is ATP synthase subunit alpha (Clostridioides difficile (strain 630) (Peptoclostridium difficile)).